We begin with the raw amino-acid sequence, 125 residues long: uncharacterized protein (125 aa).

The helical transmembrane segment at 21–43 threads the bilayer; the sequence is KFSLIALVSFTALAIIVLYHNIS.

Its subcellular location is the membrane. This is an uncharacterized protein from Archaeoglobus fulgidus (strain ATCC 49558 / DSM 4304 / JCM 9628 / NBRC 100126 / VC-16).